A 232-amino-acid chain; its full sequence is Small ribosomal subunit protein uS3 (232 aa).

Residues 39–107 (VRQFLTKELQ…PAQINIAEVR (69 aa)) enclose the KH type-2 domain. The segment at 213-232 (AANAVEPKGDKPKKQRKGRK) is disordered.

The protein belongs to the universal ribosomal protein uS3 family. In terms of assembly, part of the 30S ribosomal subunit. Forms a tight complex with proteins S10 and S14.

Its function is as follows. Binds the lower part of the 30S subunit head. Binds mRNA in the 70S ribosome, positioning it for translation. This is Small ribosomal subunit protein uS3 from Vibrio campbellii (strain ATCC BAA-1116).